We begin with the raw amino-acid sequence, 221 residues long: Kynurenine formamidase (221 aa).

Residue Phe-30 participates in substrate binding. Positions 60, 64, and 66 each coordinate Zn(2+). His-70 acts as the Proton donor/acceptor in catalysis. Residues His-172 and Glu-184 each coordinate Zn(2+).

Belongs to the Cyclase 1 superfamily. KynB family. As to quaternary structure, homodimer. Requires Zn(2+) as cofactor.

It catalyses the reaction N-formyl-L-kynurenine + H2O = L-kynurenine + formate + H(+). It participates in amino-acid degradation; L-tryptophan degradation via kynurenine pathway; L-kynurenine from L-tryptophan: step 2/2. Its function is as follows. Catalyzes the hydrolysis of N-formyl-L-kynurenine to L-kynurenine, the second step in the kynurenine pathway of tryptophan degradation. This Polaromonas sp. (strain JS666 / ATCC BAA-500) protein is Kynurenine formamidase.